Consider the following 979-residue polypeptide: MALFAVFQTTFFLTLLSLRTYQSEVLAERLPLTPVSLKVSTNSTRQSLHLQWTVHNLPYHQELKMVFQIQISRIETSNVIWVGNYSTTVKWNQVLHWSWESELPLECATHFVRIKSLVDDAKFPEPNFWSNWSSWEEVSVQDSTGQDILFVFPKDKLVEEGTNVTICYVSRNIQNNVSCYLEGKQIHGEQLDPHVTAFNLNSVPFIRNKGTNIYCEASQGNVSEGMKGIVLFVSKVLEEPKDFSCETEDFKTLHCTWDPGTDTALGWSKQPSQSYTLFESFSGEKKLCTHKNWCNWQITQDSQETYNFTLIAENYLRKRSVNILFNLTHRVYLMNPFSVNFENVNATNAIMTWKVHSIRNNFTYLCQIELHGEGKMMQYNVSIKVNGEYFLSELEPATEYMARVRCADASHFWKWSEWSGQNFTTLEAAPSEAPDVWRIVSLEPGNHTVTLFWKPLSKLHANGKILFYNVVVENLDKPSSSELHSIPAPANSTKLILDRCSYQICVIANNSVGASPASVIVISADPENKEVEEERIAGTEGGFSLSWKPQPGDVIGYVVDWCDHTQDVLGDFQWKNVGPNTTSTVISTDAFRPGVRYDFRIYGLSTKRIACLLEKKTGYSQELAPSDNPHVLVDTLTSHSFTLSWKDYSTESQPGFIQGYHVYLKSKARQCHPRFEKAVLSDGSECCKYKIDNPEEKALIVDNLKPESFYEFFITPFTSAGEGPSATFTKVTTPDEHSSMLIHILLPMVFCVLLIMVMCYLKSQWIKETCYPDIPDPYKSSILSLIKFKENPHLIIMNVSDCIPDAIEVVSKPEGTKIQFLGTRKSLTETELTKPNYLYLLPTEKNHSGPGPCICFENLTYNQAASDSGSCGHVPVSPKAPSMLGLMTSPENVLKALEKNYMNSLGEIPAGETSLNYVSQLASPMFGDKDSLPTNPVEAPHCSEYKMQMAVSLRLALPPPTENSSLSSITLLDPGEHYC.

The signal sequence occupies residues 1 to 27; the sequence is MALFAVFQTTFFLTLLSLRTYQSEVLA. Residues 28–740 lie on the Extracellular side of the membrane; the sequence is ERLPLTPVSL…VTTPDEHSSM (713 aa). N-linked (GlcNAc...) asparagine glycosylation is present at Asn163. A disulfide bridge links Cys245 with Cys255. Asn326 and Asn380 each carry an N-linked (GlcNAc...) asparagine glycan. 4 consecutive Fibronectin type-III domains span residues 335 to 428, 433 to 528, 529 to 623, and 625 to 736; these read NPFS…TLEA, APDV…DPEN, KEVE…SQEL, and PSDN…TPDE. Residues 415-419 carry the WSXWS motif motif; sequence WSEWS. N-linked (GlcNAc...) asparagine glycosylation is found at Asn446 and Asn580. The helical transmembrane segment at 741–761 threads the bilayer; sequence LIHILLPMVFCVLLIMVMCYL. Over 762–979 the chain is Cytoplasmic; sequence KSQWIKETCY…TLLDPGEHYC (218 aa). The Box 1 motif signature appears at 770–778; it reads CYPDIPDPY. Ser826 and Ser889 each carry phosphoserine.

The protein belongs to the type I cytokine receptor family. Type 2 subfamily. In terms of assembly, heterodimer composed of OSMR and IL6ST (type II OSM receptor). Heterodimer with IL31RA to form the IL31 receptor. Expressed in keratinocytes (at protein level). Expressed at relatively high levels in all neural cells as well as fibroblast and epithelial cells.

It localises to the membrane. Its function is as follows. Associates with IL31RA to form the IL31 receptor. Binds IL31 to activate STAT3 and possibly STAT1 and STAT5. Capable of transducing OSM-specific signaling events. The chain is Oncostatin-M-specific receptor subunit beta (OSMR) from Homo sapiens (Human).